The following is a 282-amino-acid chain: HTH-type transcriptional activator RhaR (282 aa).

In terms of domain architecture, HTH araC/xylS-type spans aspartate 179–leucine 277. 2 consecutive DNA-binding regions (H-T-H motif) follow at residues aspartate 196–threonine 217 and isoleucine 244–threonine 267.

Binds DNA as a dimer.

The protein localises to the cytoplasm. Its function is as follows. Activates expression of the rhaSR operon in response to L-rhamnose. This Shigella dysenteriae serotype 1 (strain Sd197) protein is HTH-type transcriptional activator RhaR.